Here is a 338-residue protein sequence, read N- to C-terminus: UDP-3-O-acylglucosamine N-acyltransferase (338 aa).

H239 functions as the Proton acceptor in the catalytic mechanism.

This sequence belongs to the transferase hexapeptide repeat family. LpxD subfamily. In terms of assembly, homotrimer.

It catalyses the reaction a UDP-3-O-[(3R)-3-hydroxyacyl]-alpha-D-glucosamine + a (3R)-hydroxyacyl-[ACP] = a UDP-2-N,3-O-bis[(3R)-3-hydroxyacyl]-alpha-D-glucosamine + holo-[ACP] + H(+). It participates in bacterial outer membrane biogenesis; LPS lipid A biosynthesis. Its function is as follows. Catalyzes the N-acylation of UDP-3-O-acylglucosamine using 3-hydroxyacyl-ACP as the acyl donor. Is involved in the biosynthesis of lipid A, a phosphorylated glycolipid that anchors the lipopolysaccharide to the outer membrane of the cell. The sequence is that of UDP-3-O-acylglucosamine N-acyltransferase from Xylella fastidiosa (strain 9a5c).